Consider the following 575-residue polypeptide: DNA polymerase (575 aa).

Residues 1–191 are 3'-5' exonuclease and strand displacement activities; the sequence is MKHMPRKMYS…KQGLDRMTAG (191 aa). Mg(2+) contacts are provided by Asp145 and Asp169. Residues 192–229 form an involved in DNA-binding, coordination between DNA synthesis and degradation and TP interaction region; the sequence is SDSLKGFKDIITTKKFKKVFPTLSLGLDKEVRYAYRGG. The tract at residues 230–562 is initiation, polymerization and pyrophosphorolytic activities; the sequence is FTWLNDRFKE…KMKPKPVQVP (333 aa). Mg(2+) contacts are provided by Asp249 and Val250. Tyr254, Lys371, and Lys383 together coordinate 5-methyl-UTP. Residues 398–420 are TPR2; the sequence is DVTGKVPYLKENGALGFRLGEEE. Positions 454–458 match the YCDTD motif; that stretch reads YCDTD. Mg(2+) is bound by residues Asp456 and Asp458. A 5-methyl-UTP-binding site is contributed by Asp458. The involved in DNA-binding and TP interaction stretch occupies residues 563–575; the sequence is GGVVLVDDTFTIK.

This sequence belongs to the DNA polymerase type-B family. In terms of assembly, interacts with the primer terminal protein; this interaction allows the initiation of TP-primed DNA replication at both viral DNA ends. Interacts with DNA. The cofactor is Mg(2+).

The enzyme catalyses DNA(n) + a 2'-deoxyribonucleoside 5'-triphosphate = DNA(n+1) + diphosphate. In terms of biological role, polymerase responsible for protein-primed viral DNA replication by strand displacement with high processivity and fidelity. To start replication, the DNA polymerase forms a heterodimer with a free primer terminal protein (TP), recognizes the replication origins at both 5' ends of the linear chromosome, and initiates replication using as primer the OH-group of Ser-232 of the TP. This polymerase possesses three enzymatic activities: DNA synthesis (polymerase), primer terminal protein (TP) deoxynucleotidylation, which is the formation of a covalent linkage (phosphoester) between the hydroxyl group of a specific serine residue in TP and 5'-dAMP, a reaction directed by the second T at the 3' end, and 3' to 5' exonuclease activity. Exonuclease activity has a proofreading purpose. DNA polymerase edits the polymerization errors using an intramolecular pathway as the primer terminus travels from one active site to the other without dissociation from the DNA. DNA polymerization catalyzed by the DNA polymerase is a highly accurate process, but the protein-primed initiation is a quite inaccurate reaction. Since the polymerase initiates the replication on the second thymine, the TP-dAMP initiation product translocates backwards to recover the template information of the first nucleotide (sliding back-mechanism). In Bacillus subtilis (Bacteriophage phi-29), this protein is DNA polymerase (2).